We begin with the raw amino-acid sequence, 334 residues long: MNGRVQPRLMLGFLLILLVILALGSANMGALSLSFRTLWNTSTNDAMWHIWLNIRLPRVLLAVVVGCALAVSGTIMQGLFRNPLADPGLLGISSGAALCVGLIIVMPFSLPPLLALYSHMVGAFIGSLAISTIIFTLSRWGHGNLARLLLAGIAINALCGAAVGVLTYISDDQQLRQFSLWSMGSLGQAQWSTLLVASSLILPTCILGLLQARQLNLLQLGDEEAHYLGVNVRQAKLRLLLLSAILIGAAVAVSGVIGFIGLVVPHLIRMRIGADHRWLLPGAALGGACLLLTADTLARTLVAPAEMPVGLLTSLLGGPYFLWLILRQREQRSG.

9 consecutive transmembrane segments (helical) span residues Leu9–Gly29, Leu60–Phe80, Ala96–Leu116, Tyr117–Leu137, Leu149–Ile169, Trp191–Gln211, Ala244–Val264, Trp278–Ala298, and Glu306–Leu326.

This sequence belongs to the binding-protein-dependent transport system permease family. FecCD subfamily.

It is found in the cell inner membrane. In terms of biological role, part of the binding-protein-dependent transport system for hemin; probably responsible for the translocation of the substrate across the membrane. The polypeptide is Hemin transport system permease protein HmuU (hmuU) (Yersinia pestis).